The sequence spans 691 residues: DNA ligase (691 aa).

NAD(+) is bound by residues 41-45 (DAEYD), 90-91 (SL), and Glu-130. Lys-132 serves as the catalytic N6-AMP-lysine intermediate. Positions 153, 190, 307, and 331 each coordinate NAD(+). Zn(2+) is bound by residues Cys-425, Cys-428, Cys-443, and Cys-449. The region spanning 610–691 (APQGVLAGKT…MHTLLEGHAR (82 aa)) is the BRCT domain.

The protein belongs to the NAD-dependent DNA ligase family. LigA subfamily. Mg(2+) serves as cofactor. Mn(2+) is required as a cofactor.

The catalysed reaction is NAD(+) + (deoxyribonucleotide)n-3'-hydroxyl + 5'-phospho-(deoxyribonucleotide)m = (deoxyribonucleotide)n+m + AMP + beta-nicotinamide D-nucleotide.. Functionally, DNA ligase that catalyzes the formation of phosphodiester linkages between 5'-phosphoryl and 3'-hydroxyl groups in double-stranded DNA using NAD as a coenzyme and as the energy source for the reaction. It is essential for DNA replication and repair of damaged DNA. This Burkholderia pseudomallei (strain 1710b) protein is DNA ligase.